The following is a 476-amino-acid chain: Aspartyl/glutamyl-tRNA(Asn/Gln) amidotransferase subunit B (476 aa).

Belongs to the GatB/GatE family. GatB subfamily. In terms of assembly, heterotrimer of A, B and C subunits.

The catalysed reaction is L-glutamyl-tRNA(Gln) + L-glutamine + ATP + H2O = L-glutaminyl-tRNA(Gln) + L-glutamate + ADP + phosphate + H(+). It catalyses the reaction L-aspartyl-tRNA(Asn) + L-glutamine + ATP + H2O = L-asparaginyl-tRNA(Asn) + L-glutamate + ADP + phosphate + 2 H(+). Its function is as follows. Allows the formation of correctly charged Asn-tRNA(Asn) or Gln-tRNA(Gln) through the transamidation of misacylated Asp-tRNA(Asn) or Glu-tRNA(Gln) in organisms which lack either or both of asparaginyl-tRNA or glutaminyl-tRNA synthetases. The reaction takes place in the presence of glutamine and ATP through an activated phospho-Asp-tRNA(Asn) or phospho-Glu-tRNA(Gln). In Lactobacillus gasseri (strain ATCC 33323 / DSM 20243 / BCRC 14619 / CIP 102991 / JCM 1131 / KCTC 3163 / NCIMB 11718 / NCTC 13722 / AM63), this protein is Aspartyl/glutamyl-tRNA(Asn/Gln) amidotransferase subunit B.